The chain runs to 295 residues: MAAKLLKGAEVAKEIRAELKTEVEQLQSKHGVVPGLVTILVGENPASQSYVRAKQNTAHELGFHSVQDNQPADLEENRLLDLIDKYNKDPSIHGILVQLPLPKHINENRILLSIDPSKDVDAFHPVNVGKLMIGEPDYLPCTPAGIQELLVRSGTQVSGAEVTIVGRSNIVGKPIAMMLVQKANGANATITVCHTRTKDVASHTRRADILIVAAGVAEYVKGNMIKPGAVVIDVGVNEVGKTADGKRILKGDVAFDEAVEVASAITPVPGGVGPMTITMLMKNTVRACKVHNKIA.

NADP(+) contacts are provided by residues 166–168 (GRS), threonine 195, and valine 236.

This sequence belongs to the tetrahydrofolate dehydrogenase/cyclohydrolase family. As to quaternary structure, homodimer.

It carries out the reaction (6R)-5,10-methylene-5,6,7,8-tetrahydrofolate + NADP(+) = (6R)-5,10-methenyltetrahydrofolate + NADPH. The catalysed reaction is (6R)-5,10-methenyltetrahydrofolate + H2O = (6R)-10-formyltetrahydrofolate + H(+). The protein operates within one-carbon metabolism; tetrahydrofolate interconversion. Its function is as follows. Catalyzes the oxidation of 5,10-methylenetetrahydrofolate to 5,10-methenyltetrahydrofolate and then the hydrolysis of 5,10-methenyltetrahydrofolate to 10-formyltetrahydrofolate. This is Bifunctional protein FolD from Syntrophobacter fumaroxidans (strain DSM 10017 / MPOB).